The sequence spans 580 residues: Ran GTPase-activating protein 1 (580 aa).

7 LRR repeats span residues Tyr48–Glu71, Gly111–Ala134, Cys141–Glu168, Ile207–Glu230, Asn235–Glu258, Leu292–Glu315, and Lys320–Glu343. The disordered stretch occupies residues Ser356–Thr429. The segment covering Ser358–Asp399 has biased composition (acidic residues).

This sequence belongs to the RNA1 family. As to quaternary structure, homodimer. Identified in a complex with RANBP2 and the ubiquitin-conjugating enzyme E2 (UBE2I). In terms of processing, may be sumoylated.

It localises to the cytoplasm. The protein resides in the nucleus. The protein localises to the nucleoplasm. Its subcellular location is the nucleus envelope. It is found in the chromosome. It localises to the centromere. The protein resides in the kinetochore. The protein localises to the cytoskeleton. Its subcellular location is the spindle. Its function is as follows. GTPase activator for RAN, converting it to the GDP-bound state. Converts cytoplasmic GTP-bound RAN to GDP-bound RAN, which is required for RAN-mediated nuclear import and export. The sequence is that of Ran GTPase-activating protein 1 (rangap1) from Xenopus laevis (African clawed frog).